The chain runs to 103 residues: Large ribosomal subunit protein uL24 (103 aa).

This sequence belongs to the universal ribosomal protein uL24 family. Part of the 50S ribosomal subunit.

One of two assembly initiator proteins, it binds directly to the 5'-end of the 23S rRNA, where it nucleates assembly of the 50S subunit. Its function is as follows. One of the proteins that surrounds the polypeptide exit tunnel on the outside of the subunit. This Haemophilus ducreyi (strain 35000HP / ATCC 700724) protein is Large ribosomal subunit protein uL24.